The sequence spans 66 residues: Large ribosomal subunit protein bL35 (66 aa).

The span at 1–16 (MPKQKTHRASAKRFKR) shows a compositional bias: basic residues. The disordered stretch occupies residues 1–20 (MPKQKTHRASAKRFKRTGSG).

Belongs to the bacterial ribosomal protein bL35 family.

This chain is Large ribosomal subunit protein bL35, found in Streptococcus uberis (strain ATCC BAA-854 / 0140J).